Reading from the N-terminus, the 442-residue chain is Putative amino acid transporter YuiF (442 aa).

Helical transmembrane passes span 21–41 (IVIA…LGLG), 51–71 (LGGN…AAAL), 103–123 (LIVL…PVHI), 146–166 (LIAC…PVGF), 190–210 (IPYA…LSVI), 236–256 (IGIA…LSQT), 259–279 (VEGM…SGVM), 292–312 (MVLM…SNVL), 335–355 (LGAL…GSSF), 364–384 (IFVP…AIIG), and 421–441 (VPTF…AALV).

It localises to the cell membrane. This Bacillus subtilis (strain 168) protein is Putative amino acid transporter YuiF (yuiF).